The primary structure comprises 266 residues: GTP cyclohydrolase III (266 aa).

Belongs to the archaeal-type GTP cyclohydrolase family.

It carries out the reaction GTP + 3 H2O = 2-amino-5-formylamino-6-(5-phospho-D-ribosylamino)pyrimidin-4(3H)-one + 2 phosphate + 2 H(+). Catalyzes the formation of 2-amino-5-formylamino-6-ribofuranosylamino-4(3H)-pyrimidinone ribonucleotide monophosphate and inorganic phosphate from GTP. Also has an independent pyrophosphate phosphohydrolase activity. This is GTP cyclohydrolase III from Methanococcus maripaludis (strain C7 / ATCC BAA-1331).